A 202-amino-acid chain; its full sequence is Transmembrane 4 L6 family member 1 (202 aa).

Residues 1 to 9 (MCYVKCARY) are Cytoplasmic-facing. A helical transmembrane segment spans residues 10–30 (IGYSLVWAAVFCIVANALLYF). At 31–49 (PNGETKYATEDHLSRFVWY) the chain is on the extracellular side. Residues 50–70 (FAGIVGGGLLMLLPAFVFIGM) form a helical membrane-spanning segment. Residues 71-93 (DEEDCCGCCGYENYGKRCSMLSS) lie on the Cytoplasmic side of the membrane. The helical transmembrane segment at 94 to 114 (VLAALIGIVGSAYCVIVASLG) threads the bilayer. Over 115–161 (LAEGPKCSDAHGVWNYTFASTEGQYLLNSSMWSKCYEPKHIVEWHVT) the chain is Extracellular. N-linked (GlcNAc...) asparagine glycans are attached at residues asparagine 129 and asparagine 142. The chain crosses the membrane as a helical span at residues 162–182 (LFSILLAFAAVEFILCLIQVI). The Cytoplasmic segment spans residues 183–202 (NGMLGGLCGYCCSRQQQYNC).

It belongs to the L6 tetraspanin family. As to quaternary structure, present in high molecular weight complexes in tumor cells. Interacts with SDCBP2. In terms of tissue distribution, highly expressed in skin and lung. Moderately expressed in lymph nodes and kidneys. Also present in thymic stroma and fibroblasts.

The protein localises to the membrane. The protein is Transmembrane 4 L6 family member 1 (Tm4sf1) of Mus musculus (Mouse).